Reading from the N-terminus, the 222-residue chain is Putative metal transport protein MJ1569 (222 aa).

Helical transmembrane passes span 3 to 23 (IPDG…MIPI), 39 to 59 (LPLL…NLPV), 81 to 101 (WVAT…FGDG), 102 to 122 (GITC…FVGY), 135 to 155 (VIAS…VAGF), and 180 to 200 (AFAH…IVVW).

This sequence belongs to the CbiM family.

The protein resides in the cell membrane. Functionally, may be involved in metal transport. This Methanocaldococcus jannaschii (strain ATCC 43067 / DSM 2661 / JAL-1 / JCM 10045 / NBRC 100440) (Methanococcus jannaschii) protein is Putative metal transport protein MJ1569.